The sequence spans 220 residues: Probable transcriptional regulator NRG2 (220 aa).

C2H2-type zinc fingers lie at residues 153 to 175 (HFCK…NRIH) and 181 to 205 (HICP…YRTH).

Its subcellular location is the nucleus. In terms of biological role, transcriptional repressor. In Saccharomyces cerevisiae (strain ATCC 204508 / S288c) (Baker's yeast), this protein is Probable transcriptional regulator NRG2 (NRG2).